Here is a 184-residue protein sequence, read N- to C-terminus: Photosystem I assembly protein Ycf4 (184 aa).

Helical transmembrane passes span 25–45 (ACILFFGSLGFFLVGISSYLG) and 57–77 (ILFVPQGIVMCFYGIAGLFIS).

The protein belongs to the Ycf4 family.

Its subcellular location is the plastid. It is found in the chloroplast thylakoid membrane. In terms of biological role, seems to be required for the assembly of the photosystem I complex. The sequence is that of Photosystem I assembly protein Ycf4 from Cycas taitungensis (Prince sago).